Consider the following 403-residue polypeptide: 4-hydroxy-3-methylbut-2-enyl diphosphate reductase (403 aa).

[4Fe-4S] cluster is bound at residue Cys66. His96 is a binding site for (2E)-4-hydroxy-3-methylbut-2-enyl diphosphate. Dimethylallyl diphosphate is bound at residue His96. His96 contributes to the isopentenyl diphosphate binding site. Cys157 is a [4Fe-4S] cluster binding site. Position 185 (His185) interacts with (2E)-4-hydroxy-3-methylbut-2-enyl diphosphate. His185 is a binding site for dimethylallyl diphosphate. His185 contacts isopentenyl diphosphate. The Proton donor role is filled by Glu187. A (2E)-4-hydroxy-3-methylbut-2-enyl diphosphate-binding site is contributed by Thr250. Residue Cys288 coordinates [4Fe-4S] cluster. (2E)-4-hydroxy-3-methylbut-2-enyl diphosphate contacts are provided by Ser317, Ser318, Asn319, and Ser379. Residues Ser317, Ser318, Asn319, and Ser379 each coordinate dimethylallyl diphosphate. Isopentenyl diphosphate-binding residues include Ser317, Ser318, Asn319, and Ser379.

It belongs to the IspH family. It depends on [4Fe-4S] cluster as a cofactor.

The catalysed reaction is isopentenyl diphosphate + 2 oxidized [2Fe-2S]-[ferredoxin] + H2O = (2E)-4-hydroxy-3-methylbut-2-enyl diphosphate + 2 reduced [2Fe-2S]-[ferredoxin] + 2 H(+). The enzyme catalyses dimethylallyl diphosphate + 2 oxidized [2Fe-2S]-[ferredoxin] + H2O = (2E)-4-hydroxy-3-methylbut-2-enyl diphosphate + 2 reduced [2Fe-2S]-[ferredoxin] + 2 H(+). It participates in isoprenoid biosynthesis; dimethylallyl diphosphate biosynthesis; dimethylallyl diphosphate from (2E)-4-hydroxy-3-methylbutenyl diphosphate: step 1/1. Its pathway is isoprenoid biosynthesis; isopentenyl diphosphate biosynthesis via DXP pathway; isopentenyl diphosphate from 1-deoxy-D-xylulose 5-phosphate: step 6/6. In terms of biological role, catalyzes the conversion of 1-hydroxy-2-methyl-2-(E)-butenyl 4-diphosphate (HMBPP) into a mixture of isopentenyl diphosphate (IPP) and dimethylallyl diphosphate (DMAPP). Acts in the terminal step of the DOXP/MEP pathway for isoprenoid precursor biosynthesis. This is 4-hydroxy-3-methylbut-2-enyl diphosphate reductase from Rippkaea orientalis (strain PCC 8801 / RF-1) (Cyanothece sp. (strain PCC 8801)).